The primary structure comprises 655 residues: Proprotein convertase subtilisin/kexin type 4 (655 aa).

The first 26 residues, M1 to A26, serve as a signal peptide directing secretion. Residues Q27–R110 constitute a propeptide that is removed on maturation. A Peptidase S8 domain is found at Q123 to V437. Residues D155, H196, and S370 each act as charge relay system in the active site. The 135-residue stretch at T446 to D580 folds into the P/Homo B domain. N472 is a glycosylation site (N-linked (GlcNAc...) asparagine).

Belongs to the peptidase S8 family. Furin subfamily. In terms of assembly, the proPCSK4 form interacts with HSPA5; the interaction takes place at the endoplasmic reticulum. N-glycosylated. In terms of processing, synthesized in the endoplasmic reticulum as a zymogen, is matured by autocatalytic cleavage between the prodomain and the catalytic domain. In terms of tissue distribution, expressed abundantly in the testis since postnatal Day 16. In testis, strongly detected in round and elongated spermatids as well as spermatocytes. Also observed in residual bodies engulfed by Sertoli cells at spermatogenic stages VIII and IX. In ovaries, expressed in macrophage-like cells of the ovarian theca, interstitium and corpora lutea.

It localises to the cytoplasmic vesicle. The protein resides in the secretory vesicle. Its subcellular location is the acrosome membrane. Functionally, proprotein convertase involved in the processing of hormone and other protein precursors at sites comprised of pairs of basic amino acid residues. In males, important for ADAM2 processing as well as other acrosomal proteins with roles in fertilization and critical for normal fertilization events such as sperm capacitation, acrosome reaction and binding of sperm to zona pellucida. Also plays a role in female fertility, involved in the regulation of trophoblast migration and placental development, may be through the proteolytical processing and activation of proteins such as IGF2. May also participate in folliculogenesis in the ovaries. The polypeptide is Proprotein convertase subtilisin/kexin type 4 (Pcsk4) (Mus musculus (Mouse)).